The sequence spans 155 residues: Regulatory protein RecX (155 aa).

This sequence belongs to the RecX family.

The protein localises to the cytoplasm. In terms of biological role, modulates RecA activity. The sequence is that of Regulatory protein RecX from Vibrio campbellii (strain ATCC BAA-1116).